We begin with the raw amino-acid sequence, 166 residues long: Large ribosomal subunit protein uL10 (166 aa).

Belongs to the universal ribosomal protein uL10 family. Part of the ribosomal stalk of the 50S ribosomal subunit. The N-terminus interacts with L11 and the large rRNA to form the base of the stalk. The C-terminus forms an elongated spine to which L12 dimers bind in a sequential fashion forming a multimeric L10(L12)X complex.

In terms of biological role, forms part of the ribosomal stalk, playing a central role in the interaction of the ribosome with GTP-bound translation factors. This is Large ribosomal subunit protein uL10 from Oceanobacillus iheyensis (strain DSM 14371 / CIP 107618 / JCM 11309 / KCTC 3954 / HTE831).